The sequence spans 833 residues: Leucine--tRNA ligase (833 aa).

The short motif at 41-52 (PYPSGAGLHVGH) is the 'HIGH' region element. Positions 610–614 (KMSKS) match the 'KMSKS' region motif. Lys613 is an ATP binding site.

It belongs to the class-I aminoacyl-tRNA synthetase family.

It is found in the cytoplasm. It catalyses the reaction tRNA(Leu) + L-leucine + ATP = L-leucyl-tRNA(Leu) + AMP + diphosphate. This chain is Leucine--tRNA ligase, found in Streptococcus suis (strain 98HAH33).